The sequence spans 83 residues: Small ribosomal subunit protein uS17 (83 aa).

The protein belongs to the universal ribosomal protein uS17 family. In terms of assembly, part of the 30S ribosomal subunit.

Its function is as follows. One of the primary rRNA binding proteins, it binds specifically to the 5'-end of 16S ribosomal RNA. The protein is Small ribosomal subunit protein uS17 of Gloeobacter violaceus (strain ATCC 29082 / PCC 7421).